The following is a 1083-amino-acid chain: Error-prone DNA polymerase (1083 aa).

This sequence belongs to the DNA polymerase type-C family. DnaE2 subfamily.

The protein resides in the cytoplasm. The enzyme catalyses DNA(n) + a 2'-deoxyribonucleoside 5'-triphosphate = DNA(n+1) + diphosphate. Functionally, DNA polymerase involved in damage-induced mutagenesis and translesion synthesis (TLS). It is not the major replicative DNA polymerase. This Xanthomonas oryzae pv. oryzae (strain PXO99A) protein is Error-prone DNA polymerase.